Consider the following 135-residue polypeptide: MKLSCLSLALAIILLLAIVHSPNMEVKALAGPEADAIGFADAFGEADAFGEADAFGEADAFGEADAFGEADAKRSKSSSKTKPKKPKKPKKKIKIPDWVKSGGKMVGEAVAGAVADAAVSAVMDAAVGTTAEPEQ.

The first 21 residues, 1–21 (MKLSCLSLALAIILLLAIVHS), serve as a signal peptide directing secretion. Positions 22–72 (PNMEVKALAGPEADAIGFADAFGEADAFGEADAFGEADAFGEADAFGEADA) are excised as a propeptide. The tract at residues 69 to 95 (EADAKRSKSSSKTKPKKPKKPKKKIKI) is disordered. Over residues 75 to 93 (SKSSSKTKPKKPKKPKKKI) the composition is skewed to basic residues. O-linked (GalNAc...) serine glycosylation occurs at serine 120. 2 O-linked (GalNAc...) threonine glycosylation sites follow: threonine 129 and threonine 130.

The protein belongs to the formicidae venom precursor-01 superfamily. In terms of processing, glycosylation is critical to maintaining the aqueous solubility of this protein, but does not directly contribute to its activity. Expressed by the venom gland.

Its subcellular location is the secreted. The protein resides in the target cell membrane. Its function is as follows. Neurotoxin that triggers pain behavior and inflammation in mammals, and is paralytic and lethal to insects. Causes a time-dependent increase in cell leak current. May act by targeting membranes. The protein is U-myrmeciitoxin(01)-Mg7a of Myrmecia gulosa (Red bulldog ant).